The primary structure comprises 173 residues: Putative phosphoesterase GWCH70_0799 (173 aa).

His-34 serves as the catalytic Proton donor. Short sequence motifs (HXTX) lie at residues 34-37 (HLTL) and 115-118 (HITI). The active-site Proton acceptor is His-115.

Belongs to the 2H phosphoesterase superfamily. YjcG family.

The protein is Putative phosphoesterase GWCH70_0799 of Geobacillus sp. (strain WCH70).